The chain runs to 195 residues: Imidazoleglycerol-phosphate dehydratase (195 aa).

This sequence belongs to the imidazoleglycerol-phosphate dehydratase family.

The protein resides in the cytoplasm. The enzyme catalyses D-erythro-1-(imidazol-4-yl)glycerol 3-phosphate = 3-(imidazol-4-yl)-2-oxopropyl phosphate + H2O. It participates in amino-acid biosynthesis; L-histidine biosynthesis; L-histidine from 5-phospho-alpha-D-ribose 1-diphosphate: step 6/9. This chain is Imidazoleglycerol-phosphate dehydratase, found in Campylobacter concisus (strain 13826).